The chain runs to 670 residues: Receptor for retinol uptake STRA6 (670 aa).

The Extracellular portion of the chain corresponds to 1–50; that stretch reads MESQASENGSQTSSGVTDDYSSWYIEEPLGAEEVQPEGVIPLCQLTAPPA. Residue Asn8 is glycosylated (N-linked (GlcNAc...) asparagine). A helical transmembrane segment spans residues 51–71; that stretch reads LLHACLASLSFLVLLLLALLV. Over 72–97 the chain is Cytoplasmic; that stretch reads RRRRLWPRCGHRGLGLPSPVDFLAGD. The helical transmembrane segment at 98–118 threads the bilayer; sequence LSWTVPAAVFVVLFSNLCLLL. Topologically, residues 119-144 are extracellular; sequence PDENPLPFLNLTAASSPDGEMETSRG. Asn128 is a glycosylation site (N-linked (GlcNAc...) asparagine). The chain crosses the membrane as a helical span at residues 145–165; it reads PWKLLALLYYPALYYPLAACA. Residues 166–168 are Cytoplasmic-facing; that stretch reads SAG. A helical membrane pass occupies residues 169 to 189; the sequence is HQAAFLLGTVLSWAHFGVQVW. The Extracellular segment spans residues 190-205; that stretch reads QKAECPQDPKIYKHYS. A helical transmembrane segment spans residues 206 to 226; it reads LLASLPLLLGLGFLSLWYPVQ. Topologically, residues 227–296 are cytoplasmic; sequence LVQSLRHRTG…PQPGFRLPLK (70 aa). Positions 235 to 294 are interaction with RBP1; that stretch reads TGAGSQGLQTSYSEKYLRTLLCPKKLDSCSHPASKRSLLSRAWAFSHHSIYTPQPGFRLP. Residues 297–317 form a helical membrane-spanning segment; the sequence is LVISATLTGTATYQVALLLLV. Topologically, residues 318 to 368 are extracellular; it reads SVVPTVQKVRAGINTDVSYLLAGFGIVLSEDRQEVVELVKHHLWTVEACYI. A helical transmembrane segment spans residues 369 to 389; sequence SALVLSCASTFLLLIRSLRTH. Residues 390 to 423 lie on the Cytoplasmic side of the membrane; that stretch reads RANLQALHRGAALDLDPPLQSIHPSRQAIVSWMS. Residues 424–444 form a helical membrane-spanning segment; that stretch reads FCAYQTAFSCLGLLVQQVIFF. Over 445 to 474 the chain is Extracellular; that stretch reads LGTTSLAFLVFVPLLHGRNLLLLRSLESTW. The chain crosses the membrane as a helical span at residues 475–495; that stretch reads PFWLTVALAVILQNIAANWIF. At 496-510 the chain is on the cytoplasmic side; it reads LRTHHGYPELTNRRM. An intramembrane region (helical) is located at residues 511–548; it reads LCVATFLLFPINMLVGAIMAVWRVLISSLYNTVHLGQM. Over 549-670 the chain is Cytoplasmic; that stretch reads DLSLLPQRAA…TSAKANGTQP (122 aa). Residue Tyr644 is modified to Phosphotyrosine.

Homodimer. Interacts with JAK2 and STAT5. Interacts (via extracellular domains) with RBP4. Interacts (via cytoplasmic domains) with RBP1. Phosphorylated on tyrosine residues in response to RBP4 binding. Phosphorylation requires the presence of LRAT, suggesting it may be triggered by the uptake of retinol that is then metabolized within the cell to retinoids that function as signaling molecules. Widely expressed in the embryo. Detected in adult in the retinal pigment epithelium in the eye. In the adult, is highly expressed in cells that compose blood-organ barriers in the brain (choroid plexus and the brain microvascular), in testis (the basal layer of the seminiferous epithelium), in the yolk sac, and in the chorioallantoic placenta. Detected in white adipose tissue and skeletal muscle, but not in liver (at protein level). Widely expressed in adult, with high expression levels in the eye. Detected in brain, cerebellum, testis, pituitary, pancreas, kidney, spleen, and female genital tract; and at very low levels in heart and lung. Not detected in liver.

Its subcellular location is the cell membrane. Its function is as follows. Functions as a retinol transporter. Accepts all-trans retinol from the extracellular retinol-binding protein RBP4, facilitates retinol transport across the cell membrane, and then transfers retinol to the cytoplasmic retinol-binding protein RBP1. Retinol uptake is enhanced by LRAT, an enzyme that converts retinol to all-trans retinyl esters, the storage forms of vitamin A. Contributes to the activation of a signaling cascade that depends on retinol transport and LRAT-dependent generation of retinol metabolites that then trigger activation of JAK2 and its target STAT5, and ultimately increase the expression of SOCS3 and inhibit cellular responses to insulin. Important for the homeostasis of vitamin A and its derivatives, such as retinoic acid and 11-cis-retinal. STRA6-mediated transport is particularly important in the eye, and under conditions of dietary vitamin A deficiency. Does not transport retinoic acid. The chain is Receptor for retinol uptake STRA6 (Stra6) from Mus musculus (Mouse).